The chain runs to 468 residues: Putative ankyrin repeat protein R580 (468 aa).

6 ANK repeats span residues 12 to 41 (DYFD…TLID), 189 to 218 (VINK…EINC), 249 to 278 (CHFD…KINS), 336 to 365 (SFDN…NINF), 367 to 393 (NMPT…DLEI), and 394 to 423 (HGTL…KFSL).

The chain is Putative ankyrin repeat protein R580 from Acanthamoeba polyphaga (Amoeba).